The primary structure comprises 476 residues: Protein transport protein Sec61 subunit alpha (476 aa).

The Cytoplasmic segment spans residues 2 to 33; it reads GIKFLEFIKPFCAVLPEIQKPERKIQFREKVL. Residues 34–53 traverse the membrane as a helical segment; the sequence is WTAITLFIFLVCCQIPLFGI. The Lumenal segment spans residues 54-76; the sequence is MSSDSADPFYWMRVILASNRGTL. The helical transmembrane segment at 77-96 threads the bilayer; it reads MELGISPIVTSGLIMQLLAG. Over 97–117 the chain is Cytoplasmic; that stretch reads AKIIEVGDTPKDRALFNGAQK. Residues 118-138 traverse the membrane as a helical segment; that stretch reads LFGMIITIGQAIVYVMTGMYG. The Lumenal segment spans residues 139-144; the sequence is DPSEMG. The helical transmembrane segment at 145–165 threads the bilayer; that stretch reads AGICLLIIIQLFVAGLIVLLL. The Cytoplasmic portion of the chain corresponds to 166-172; that stretch reads DELLQKG. Residues 173-193 traverse the membrane as a helical segment; the sequence is YGLGSGISLFIATNICETIVW. At 194–240 the chain is on the lumenal side; it reads KAFSPTTVNTGRGTEFEGAIIALFHLLATRTDKVRALREAFYRQNLP. The chain crosses the membrane as a helical span at residues 241 to 261; it reads NILNLIATVFVFAVVIYFQGF. Topologically, residues 262 to 288 are cytoplasmic; sequence RVDLPIKSARYRGQYNTYPIKLFYTSN. Residues 289–309 traverse the membrane as a helical segment; that stretch reads IPIILQSALVSNLYVISQMLS. The Lumenal segment spans residues 310-354; the sequence is TRFSGNFLVNLLGTWSDATSGGPARAYPVAGLCYYLSPPESFGSV. A helical transmembrane segment spans residues 355–375; that stretch reads LDDPVHAAIYIVFMLGSCAFF. Topologically, residues 376–420 are cytoplasmic; the sequence is SKTWIEVSGSSAKDVAKQLKEQQMVMRGHRETSMVHELNRYIPTA. A helical transmembrane segment spans residues 421–441; that stretch reads AAFGGLCIGGLSVMADFLGAI. Topologically, residues 442–445 are lumenal; sequence GSGT. Residues 446-462 form a helical membrane-spanning segment; sequence GILLAVTIIYQYFEIFV. Topologically, residues 463–476 are cytoplasmic; it reads KEQSEMGSMGALLF.

Belongs to the SecY/SEC61-alpha family. In terms of assembly, the SEC61 channel-forming translocon complex consists of channel-forming core components SEC61A1, SEC61B and SEC61G and different auxiliary components such as SEC62 and SEC63. The SEC61 channel associates with the multi-pass translocon (MPT) complex.

The protein resides in the endoplasmic reticulum membrane. In terms of biological role, component of SEC61 channel-forming translocon complex that mediates transport of signal peptide-containing precursor polypeptides across the endoplasmic reticulum (ER). Forms a ribosome receptor and a gated pore in the ER membrane, both functions required for cotranslational translocation of nascent polypeptides. May cooperate with auxiliary protein SEC62, SEC63 and HSPA5/BiP to enable post-translational transport of small presecretory proteins. The SEC61 channel is also involved in ER membrane insertion of transmembrane proteins: it mediates membrane insertion of the first few transmembrane segments of proteins, while insertion of subsequent transmembrane regions of multi-pass membrane proteins is mediated by the multi-pass translocon (MPT) complex. The protein is Protein transport protein Sec61 subunit alpha (sec61a) of Notothenia angustata (Rockcod).